We begin with the raw amino-acid sequence, 375 residues long: Protein RecA (375 aa).

ATP is bound at residue 88–95 (GPESSGKT).

The protein belongs to the RecA family.

It is found in the cytoplasm. In terms of biological role, can catalyze the hydrolysis of ATP in the presence of single-stranded DNA, the ATP-dependent uptake of single-stranded DNA by duplex DNA, and the ATP-dependent hybridization of homologous single-stranded DNAs. It interacts with LexA causing its activation and leading to its autocatalytic cleavage. The chain is Protein RecA from Rhodopirellula baltica (strain DSM 10527 / NCIMB 13988 / SH1).